Here is a 370-residue protein sequence, read N- to C-terminus: UPF0284 protein PCC7424_2681 (370 aa).

The protein belongs to the UPF0284 family.

This chain is UPF0284 protein PCC7424_2681, found in Gloeothece citriformis (strain PCC 7424) (Cyanothece sp. (strain PCC 7424)).